The sequence spans 342 residues: Large ribosomal subunit protein uL10 (342 aa).

Residues 212–342 (EYIDMLQKAY…ALAGLSALFG (131 aa)) are required for interaction with ribosomal protein L12 dimers. Over residues 299-308 (QAQVAVATQP) the composition is skewed to polar residues. The tract at residues 299 to 342 (QAQVAVATQPSEEEKKEEEKTEEEEKEEEASEEEALAGLSALFG) is disordered. A compositionally biased stretch (acidic residues) spans 318-333 (KTEEEEKEEEASEEEA).

Belongs to the universal ribosomal protein uL10 family. Part of the 50S ribosomal subunit, binds large rRNA. Forms the ribosomal stalk which helps the ribosome interact with GTP-bound translation factors. Forms a heptameric L10(L12)2(L12)2(L12)2 complex, where L10 forms an elongated spine to which the L12 dimers bind in a sequential fashion.

In terms of biological role, forms the large subunit's ribosomal stalk, playing a central role in the interaction of the ribosome with elongation factors; the stalk complex of P.horikoshii binds to E.coli large subunits and confers on them the ability to interact with eukaryotic elongation factors. Each succesive L12 dimer bound along the P0 spine increases the GTPase activity of elongation factors and increases translation by reconsituted ribosomes, although the first site is the most stimulatory. The chain is Large ribosomal subunit protein uL10 from Pyrococcus horikoshii (strain ATCC 700860 / DSM 12428 / JCM 9974 / NBRC 100139 / OT-3).